The primary structure comprises 307 residues: Metapyrocatechase (307 aa).

VOC domains follow at residues 7 to 122 and 150 to 269; these read RPGH…LYAD and RFDH…VFCG. The Fe cation site is built by His-153, His-214, and Glu-265.

This sequence belongs to the extradiol ring-cleavage dioxygenase family. In terms of assembly, homotetramer. Fe(2+) serves as cofactor.

The enzyme catalyses catechol + O2 = (2Z,4E)-2-hydroxy-6-oxohexa-2,4-dienoate + H(+). Its pathway is xenobiotic degradation; toluene degradation. The polypeptide is Metapyrocatechase (xylE) (Pseudomonas putida (Arthrobacter siderocapsulatus)).